A 309-amino-acid polypeptide reads, in one-letter code: Olfactory receptor 1A1 (309 aa).

The Extracellular segment spans residues 1–25; sequence MRENNQSSTLEFILLGVTGQQEQED. Asn-5 is a glycosylation site (N-linked (GlcNAc...) asparagine). The chain crosses the membrane as a helical span at residues 26-49; sequence FFYILFLFIYPITLIGNLLIVLAI. Residues 50 to 57 lie on the Cytoplasmic side of the membrane; that stretch reads CSDVRLHN. The helical transmembrane segment at 58–79 threads the bilayer; it reads PMYFLLANLSLVDIFFSSVTIP. At 80–100 the chain is on the extracellular side; sequence KMLANHLLGSKSISFGGCLTQ. Cys-97 and Cys-189 form a disulfide bridge. Residues 101–120 traverse the membrane as a helical segment; sequence MYFMIALGNTDSYILAAMAY. Residues 121-139 lie on the Cytoplasmic side of the membrane; sequence DRAVAISRPLHYTTIMSPR. A helical transmembrane segment spans residues 140–158; sequence SCIWLIAGSWVIGNANALP. Topologically, residues 159 to 195 are extracellular; sequence HTLLTASLSFCGNQEVANFYCDITPLLKLSCSDIHFH. A helical transmembrane segment spans residues 196-218; that stretch reads VKMMYLGVGIFSVPLLCIIVSYI. Residues 219–235 are Cytoplasmic-facing; it reads RVFSTVFQVPSTKGVLK. Residues 236-258 form a helical membrane-spanning segment; the sequence is AFSTCGSHLTVVSLYYGTVMGTY. At 259–270 the chain is on the extracellular side; sequence FRPLTNYSLKDA. Asn-264 is a glycosylation site (N-linked (GlcNAc...) asparagine). Residues 271–290 traverse the membrane as a helical segment; it reads VITVMYTAVTPMLNPFIYSL. Residues 291 to 309 lie on the Cytoplasmic side of the membrane; the sequence is RNRDMKAALRKLFNKRISS.

The protein belongs to the G-protein coupled receptor 1 family.

The protein resides in the cell membrane. Odorant receptor. In Homo sapiens (Human), this protein is Olfactory receptor 1A1 (OR1A1).